Reading from the N-terminus, the 424-residue chain is UPF0597 protein Sputw3181_2955 (424 aa).

It belongs to the UPF0597 family.

This chain is UPF0597 protein Sputw3181_2955, found in Shewanella sp. (strain W3-18-1).